The sequence spans 98 residues: Prostate and testis expressed protein 3 (98 aa).

Residues 1 to 20 form the signal peptide; the sequence is MNKHFLLLFSLFYFIVEATS. Positions 21 to 97 constitute a UPAR/Ly6 domain; the sequence is LKCVTCHLRT…CCNSDFCNFR (77 aa). 4 disulfide bridges follow: C23–C50, C26–C35, C42–C68, and C72–C88.

The protein belongs to the PATE family.

Its subcellular location is the secreted. This Mus musculus (Mouse) protein is Prostate and testis expressed protein 3 (Pate3).